Here is a 267-residue protein sequence, read N- to C-terminus: N-acetylgalactosamine permease IIC component 1 (267 aa).

Residues 1–10 (MHEITLLQGL) are Periplasmic-facing. The PTS EIIC type-4 domain occupies 1–237 (MHEITLLQGL…VAVLGAGFAV (237 aa)). Residues 11–31 (SLAALVFVLGIDFWLEALFLF) form a helical membrane-spanning segment. Residues 32–33 (RP) are Cytoplasmic-facing. A helical membrane pass occupies residues 34–54 (IIVCTLTGAILGDIQTGLITG). The Periplasmic portion of the chain corresponds to 55-66 (GLTELAFAGLTP). Residues 67–87 (AGGVQPPNPIMAGLMTTVIAW) form a helical membrane-spanning segment. The Cytoplasmic segment spans residues 88–94 (STGVDAK). Residues 95 to 115 (TAIGLGLPFSLLMQYVILFFY) traverse the membrane as a helical segment. The Periplasmic segment spans residues 116-141 (SAFSLFMTKADKCAKEADTAAFSRLN). The chain crosses the membrane as a helical span at residues 142–162 (WTTMLIVASAYAVIAFLCTYL). At 163–177 (AQGAMQALVKAMPAW) the chain is on the cytoplasmic side. The chain crosses the membrane as a helical span at residues 178-198 (LTHGFEVAGGILPAVGFGLLL). Topologically, residues 199–209 (RVMFKAQYIPY) are periplasmic. Residues 210–230 (LIAGFLFVCYIQVSNLLPVAV) traverse the membrane as a helical segment. The Cytoplasmic portion of the chain corresponds to 231 to 267 (LGAGFAVYEFFNAKSRQQAQPQPVASKNEEEDYSNGI).

The protein resides in the cell inner membrane. Functionally, the phosphoenolpyruvate-dependent sugar phosphotransferase system (PTS), a major carbohydrate active -transport system, catalyzes the phosphorylation of incoming sugar substrates concomitant with their translocation across the cell membrane. This system is involved in N-acetylgalactosamine transport. This Escherichia coli (strain K12) protein is N-acetylgalactosamine permease IIC component 1 (agaC).